The chain runs to 263 residues: Hydroxyethylthiazole kinase (263 aa).

Methionine 41 is a binding site for substrate. Residues arginine 117 and serine 163 each coordinate ATP. A substrate-binding site is contributed by glycine 190.

It belongs to the Thz kinase family. Mg(2+) is required as a cofactor.

The catalysed reaction is 5-(2-hydroxyethyl)-4-methylthiazole + ATP = 4-methyl-5-(2-phosphooxyethyl)-thiazole + ADP + H(+). The protein operates within cofactor biosynthesis; thiamine diphosphate biosynthesis; 4-methyl-5-(2-phosphoethyl)-thiazole from 5-(2-hydroxyethyl)-4-methylthiazole: step 1/1. Catalyzes the phosphorylation of the hydroxyl group of 4-methyl-5-beta-hydroxyethylthiazole (THZ). The chain is Hydroxyethylthiazole kinase from Lactiplantibacillus plantarum (strain ATCC BAA-793 / NCIMB 8826 / WCFS1) (Lactobacillus plantarum).